The chain runs to 130 residues: MAIQANMTVGRRKEAVARVRLVPGTGNITINGRSMDEYFGRETSKMILVEPLKLVDQMGKLDVFVNAAGGGLSGQAGAIRHGISRALVELNPEYRPVLKKAGFMTRDARAVERKKYGRPGARKRFQFSKR.

Belongs to the universal ribosomal protein uS9 family.

In Anaeromyxobacter dehalogenans (strain 2CP-1 / ATCC BAA-258), this protein is Small ribosomal subunit protein uS9.